An 85-amino-acid chain; its full sequence is Large ribosomal subunit protein bL27 (85 aa).

The tract at residues 1–23 (MAHKKAGGSSRNGRDSESKRLGV) is disordered.

Belongs to the bacterial ribosomal protein bL27 family.

The polypeptide is Large ribosomal subunit protein bL27 (Methylococcus capsulatus (strain ATCC 33009 / NCIMB 11132 / Bath)).